The sequence spans 1285 residues: Protein cramped-like (1285 aa).

Residues 1–161 (MTVKLGDAGS…EGKKVRRQWE (161 aa)) are disordered. A compositionally biased stretch (basic and acidic residues) spans 13-24 (EGLKKLGKRTAD). Positions 57–71 (PAPPRGLPTPSPPQG) are enriched in pro residues. A compositionally biased stretch (gly residues) spans 100–116 (GSGGASGSGPRGKGSDG). Composition is skewed to low complexity over residues 117–126 (GASSSGNVSG) and 134–147 (GGSRSSSRNIGSSG). Positions 148–161 (PEKEEGKKVRRQWE) are enriched in basic and acidic residues. In terms of domain architecture, SANT spans 158 to 221 (RQWESWSTED…FYYRTWHKIT (64 aa)). Serine 304 is subject to Phosphoserine. 6 disordered regions span residues 456 to 519 (GQLK…GPHL), 579 to 673 (RADT…VPAS), 766 to 843 (NTAS…SDSD), 994 to 1055 (SSGI…SPAL), 1068 to 1107 (GLSIPLPSSESSSTRLSPPNVSALLDISLPGPPEDVLSQG), and 1132 to 1172 (PLSP…YPSD). Residues 479–503 (ASQSSGESSPESAPAEGAAPSLSSP) are compositionally biased toward low complexity. Basic and acidic residues-rich tracts occupy residues 505–519 (APDRPHGLQDSGPHL) and 579–589 (RADTRSGREHP). 2 stretches are compositionally biased toward polar residues: residues 654-664 (EHLSSQGQPAT) and 766-784 (NTASTASVRPTQEEQSTTP). Residues 792 to 803 (NSRSPRCSRNPS) are compositionally biased toward low complexity. Residues 804 to 813 (TLRSNKTFPS) are compositionally biased toward polar residues. Over residues 833–843 (GPSSTGSSDSD) the composition is skewed to low complexity. Residues 994–1012 (SSGISPLSSEQATTAISGQ) show a composition bias toward polar residues. Low complexity-rich tracts occupy residues 1069 to 1086 (LSIPLPSSESSSTRLSPP) and 1141 to 1156 (SDSSKSLPSPSSSPQP). Phosphoserine is present on serine 1284.

This sequence belongs to the cramped family.

It localises to the nucleus. The protein is Protein cramped-like of Mus musculus (Mouse).